The primary structure comprises 533 residues: Peptide chain release factor 3 (533 aa).

In terms of domain architecture, tr-type G spans 10-278 (EKRRTFAIIS…TFVEIAPPPQ (269 aa)). GTP contacts are provided by residues 19–26 (SHPDAGKT), 87–91 (DTPGH), and 141–144 (NKMD).

The protein belongs to the TRAFAC class translation factor GTPase superfamily. Classic translation factor GTPase family. PrfC subfamily.

The protein resides in the cytoplasm. In terms of biological role, increases the formation of ribosomal termination complexes and stimulates activities of RF-1 and RF-2. It binds guanine nucleotides and has strong preference for UGA stop codons. It may interact directly with the ribosome. The stimulation of RF-1 and RF-2 is significantly reduced by GTP and GDP, but not by GMP. This is Peptide chain release factor 3 from Salinibacter ruber (strain DSM 13855 / M31).